Reading from the N-terminus, the 284-residue chain is RNase adapter protein RapZ (284 aa).

Glycine 8 to serine 15 contributes to the ATP binding site. Aspartate 56–asparagine 59 provides a ligand contact to GTP. The segment at arginine 266–threonine 284 is RNA-binding.

Belongs to the RapZ-like family. RapZ subfamily. As to quaternary structure, homotrimer.

Modulates the synthesis of GlmS, by affecting the processing and stability of the regulatory small RNA GlmZ. When glucosamine-6-phosphate (GlcN6P) concentrations are high in the cell, RapZ binds GlmZ and targets it to cleavage by RNase E. Consequently, GlmZ is inactivated and unable to activate GlmS synthesis. Under low GlcN6P concentrations, RapZ is sequestered and inactivated by an other regulatory small RNA, GlmY, preventing GlmZ degradation and leading to synthesis of GlmS. The chain is RNase adapter protein RapZ from Salmonella typhi.